The sequence spans 548 residues: uncharacterized protein (548 aa).

The 193-residue stretch at 8–200 folds into the DhaL domain; the sequence is KLFADMIIQG…LLCVYEGFLK (193 aa).

This is an uncharacterized protein from Staphylococcus aureus (strain bovine RF122 / ET3-1).